The chain runs to 844 residues: Translation initiation factor IF-2 (844 aa).

Residues 120-132 (RNSVNLVQPQQEK) show a composition bias toward polar residues. Positions 120–220 (RNSVNLVQPQ…SGKGFKKANP (101 aa)) are disordered. The span at 161 to 175 (DEEKSSEDKSTESKN) shows a compositional bias: basic and acidic residues. Residues 205–219 (SKAKKASGKGFKKAN) are compositionally biased toward basic residues. Residues 343–510 (SRAPVVTIMG…AVLLQSEVLE (168 aa)) form the tr-type G domain. The segment at 352–359 (GHVDHGKT) is G1. 352-359 (GHVDHGKT) serves as a coordination point for GTP. The interval 377–381 (GITQH) is G2. A G3 region spans residues 398-401 (DTPG). GTP-binding positions include 398–402 (DTPGH) and 452–455 (NKID). The tract at residues 452 to 455 (NKID) is G4. Residues 488–490 (SAK) form a G5 region.

It belongs to the TRAFAC class translation factor GTPase superfamily. Classic translation factor GTPase family. IF-2 subfamily.

It localises to the cytoplasm. In terms of biological role, one of the essential components for the initiation of protein synthesis. Protects formylmethionyl-tRNA from spontaneous hydrolysis and promotes its binding to the 30S ribosomal subunits. Also involved in the hydrolysis of GTP during the formation of the 70S ribosomal complex. The chain is Translation initiation factor IF-2 from Francisella philomiragia subsp. philomiragia (strain ATCC 25017 / CCUG 19701 / FSC 153 / O#319-036).